The chain runs to 334 residues: Heat shock factor 2-binding protein (334 aa).

The interaction with BRME1 stretch occupies residues 14 to 51 (MGTKEEFVKVRKKDLERLTTEVMQIRDFLPRILNGEVL). A coiled-coil region spans residues 49-122 (EVLESFQKLK…LLQQAEYCTE (74 aa)). An interaction with BRCA2 region spans residues 83–334 (ARLETVQADN…EDLRTLEHNV (252 aa)).

As to quaternary structure, associates with HSF2. The interaction seems to occur between the trimerization domain of HSF2 and the N-terminal hydrophilic region of HSF2BP. Interacts (via C-terminus) with BNC1. Interacts (via N-terminus) with BRCA2 and BRME1; the interactions are direct and allow the formation of a ternary complex. The complex BRME1:HSF2BP:BRCA2 interacts with SPATA22, MEIOB and RAD51. Sumoylated by UBE2I in response to MEKK1-mediated stimuli. As to expression, testis specific. Overexpressed in some tumors.

The protein localises to the cytoplasm. It is found in the chromosome. Its function is as follows. Meiotic recombination factor component of recombination bridges involved in meiotic double-strand break repair. Modulates the localization of recombinases DMC1:RAD51 to meiotic double-strand break (DSB) sites through the interaction with BRCA2 and its recruitment during meiotic recombination. Indispensable for the DSB repair, homologous synapsis, and crossover formation that are needed for progression past metaphase I, is essential for spermatogenesis and male fertility. Required for proper recombinase recruitment in female meiosis. Inhibits BNC1 transcriptional activity during spermatogenesis, probably by sequestering it in the cytoplasm. May be involved in modulating HSF2 activation in testis. The protein is Heat shock factor 2-binding protein of Homo sapiens (Human).